Reading from the N-terminus, the 572-residue chain is Na(+)/citrate cotransporter (572 aa).

8 helical membrane passes run 13–33, 53–73, 80–100, 124–144, 218–238, 255–275, 315–335, and 357–377; these read SFAILLFTPILMLPLVILIPD, VIPVAVTSLLPVLLFPLLKVL, IQYMKDTNMLFLGSLIVAVAV, LMLGFMFVTAFLSMWISNTAA, SASIGGTATLTGTGPNVVLLG, SWFGFAFPNMVMMLVLAWLWL, SLSYPECNVLFCFTLLVILWF, and HITDATVAIFVAILLFIIPSQ. N382 is a glycosylation site (N-linked (GlcNAc...) asparagine). Transmembrane regions (helical) follow at residues 410-430, 443-463, 491-511, and 532-552; these read VPWDIVLLLGGGFAMAKGCET, PLRLVKPAVITLILSCLVAMT, PLYVMIPCTMSASLAFMLPVA, and TGLIMNFVGILSVFLSVNTWG. An N-linked (GlcNAc...) asparagine glycan is attached at N566.

This sequence belongs to the SLC13A/DASS transporter (TC 2.A.47) family. NADC subfamily. In terms of assembly, homodimer.

The protein localises to the cell membrane. It catalyses the reaction citrate(out) + 4 Na(+)(out) = citrate(in) + 4 Na(+)(in). With respect to regulation, inhibited by Li(+). Functionally, high-affinity sodium/citrate cotransporter that mediates citrate entry into cells, which is a critical participant of biochemical pathways. May function in various metabolic processes in which citrate has a critical role such as energy production (Krebs cycle), fatty acid synthesis, cholesterol synthesis, glycolysis, and gluconeogenesis. Transports citrate into the cell in a Na(+)-dependent manner, recognizing the trivalent form of citrate (physiological pH) rather than the divalent form. Can recognizes succinate as a substrate, but its affinity for succinate is several fold lower than for citrate. The stoichiometry is probably 4 Na(+) for each carboxylate, irrespective of whether the translocated substrate is divalent or trivalent, rendering the process electrogenic. Involved in the regulation of citrate levels in the brain. The sequence is that of Na(+)/citrate cotransporter (Slc13a5) from Mus musculus (Mouse).